The sequence spans 125 residues: Small ribosomal subunit protein uS13 (125 aa).

Belongs to the universal ribosomal protein uS13 family. As to quaternary structure, part of the 30S ribosomal subunit. Forms a loose heterodimer with protein S19. Forms two bridges to the 50S subunit in the 70S ribosome.

Located at the top of the head of the 30S subunit, it contacts several helices of the 16S rRNA. In the 70S ribosome it contacts the 23S rRNA (bridge B1a) and protein L5 of the 50S subunit (bridge B1b), connecting the 2 subunits; these bridges are implicated in subunit movement. Contacts the tRNAs in the A and P-sites. The polypeptide is Small ribosomal subunit protein uS13 (Orientia tsutsugamushi (strain Ikeda) (Rickettsia tsutsugamushi)).